The following is a 293-amino-acid chain: Glycine betaine-binding protein OpuAC (293 aa).

The N-terminal stretch at 1–20 is a signal peptide; that stretch reads MLKKIIGIGVSAMLALSLAA. Cys21 is lipidated: N-palmitoyl cysteine. Cys21 carries the S-diacylglycerol cysteine lipid modification.

The complex is composed of two ATP-binding proteins (OpuAA), two transmembrane proteins (OpuAB) and a solute-binding protein (OpuAC). Interacts with FloT.

The protein resides in the cell membrane. It is found in the membrane raft. Its function is as follows. Involved in a multicomponent binding-protein-dependent transport system for glycine betaine. The chain is Glycine betaine-binding protein OpuAC (opuAC) from Bacillus subtilis (strain 168).